The chain runs to 207 residues: Thiamine-phosphate synthase (207 aa).

Residues 35–39 (QYRDK) and asparagine 67 each bind 4-amino-2-methyl-5-(diphosphooxymethyl)pyrimidine. Positions 68 and 86 each coordinate Mg(2+). Threonine 105 contributes to the 4-amino-2-methyl-5-(diphosphooxymethyl)pyrimidine binding site. 132–134 (SVT) serves as a coordination point for 2-[(2R,5Z)-2-carboxy-4-methylthiazol-5(2H)-ylidene]ethyl phosphate. 4-amino-2-methyl-5-(diphosphooxymethyl)pyrimidine is bound at residue lysine 135. A 2-[(2R,5Z)-2-carboxy-4-methylthiazol-5(2H)-ylidene]ethyl phosphate-binding site is contributed by glycine 162.

Belongs to the thiamine-phosphate synthase family. The cofactor is Mg(2+).

The catalysed reaction is 2-[(2R,5Z)-2-carboxy-4-methylthiazol-5(2H)-ylidene]ethyl phosphate + 4-amino-2-methyl-5-(diphosphooxymethyl)pyrimidine + 2 H(+) = thiamine phosphate + CO2 + diphosphate. The enzyme catalyses 2-(2-carboxy-4-methylthiazol-5-yl)ethyl phosphate + 4-amino-2-methyl-5-(diphosphooxymethyl)pyrimidine + 2 H(+) = thiamine phosphate + CO2 + diphosphate. It carries out the reaction 4-methyl-5-(2-phosphooxyethyl)-thiazole + 4-amino-2-methyl-5-(diphosphooxymethyl)pyrimidine + H(+) = thiamine phosphate + diphosphate. It participates in cofactor biosynthesis; thiamine diphosphate biosynthesis; thiamine phosphate from 4-amino-2-methyl-5-diphosphomethylpyrimidine and 4-methyl-5-(2-phosphoethyl)-thiazole: step 1/1. In terms of biological role, condenses 4-methyl-5-(beta-hydroxyethyl)thiazole monophosphate (THZ-P) and 2-methyl-4-amino-5-hydroxymethyl pyrimidine pyrophosphate (HMP-PP) to form thiamine monophosphate (TMP). In Pseudomonas putida (strain GB-1), this protein is Thiamine-phosphate synthase.